We begin with the raw amino-acid sequence, 137 residues long: GEL complex subunit OPTI (137 aa).

Residues 1–44 (MSGGRRKEEPPQPQLANGALKVSVWSKVLRSDAAWEDKDEFLDV) are Cytoplasmic-facing. A helical membrane pass occupies residues 45–65 (IYWFRQIIAVVLGVIWGVLPL). A topological domain (lumenal) is located at residue Arg-66. The helical transmembrane segment at 67 to 84 (GFLGIAGFCLINAGVLYL) threads the bilayer. At 85–103 (YFSNYLQIDEEEYGGTWEL) the chain is on the cytoplasmic side. A helical membrane pass occupies residues 104–127 (TKEGFMTSFALFMVCVADSFTTGH). At 128-137 (LDHLLHCHPL) the chain is on the lumenal side.

This sequence belongs to the EMC6 family. In terms of assembly, component of the GET- and EMC-like (GEL) complex, composed of RAB5IF/OPTI and TMCO1. The GEL complex is part of the multi-pass translocon (MPT) complex, composed of three subcomplexes, the GEL complex (composed of RAB5IF/OPTI and TMCO1), the BOS complex (composed of NCLN/Nicalin, NOMO and TMEM147) and the PAT complex (composed of WDR83OS/Asterix and CCDC47). The MPT complex associates with the SEC61 complex. Interacts with NDUFS3, NDUFA4, NDUFV1, NDUFA9 and NDUFS8 of the mitochondrial membrane respiratory chain NADH dehydrogenase (Complex I). Interacts with UQCRC2 of the ubiquinol-cytochrome c reductase complex (Complex III). Interacts with COX5A and COX7C of the cytochrome c oxidase complex (Complex IV). Expressed in embryonic stem cells and differentiated neuronal cells.

It localises to the endoplasmic reticulum membrane. The protein resides in the mitochondrion inner membrane. Component of the multi-pass translocon (MPT) complex that mediates insertion of multi-pass membrane proteins into the lipid bilayer of membranes. The MPT complex takes over after the SEC61 complex: following membrane insertion of the first few transmembrane segments of proteins by the SEC61 complex, the MPT complex occludes the lateral gate of the SEC61 complex to promote insertion of subsequent transmembrane regions. Within the MPT complex, the GEL subcomplex may mediate insertion of transmembrane regions into the membrane. In addition to its role in multi-pass membrane insertion, RAB5IF/OPTI also acts as an assembly factor for mitochondrial respiratory complexes. This is GEL complex subunit OPTI from Homo sapiens (Human).